A 160-amino-acid polypeptide reads, in one-letter code: Transcription elongation factor GreA (160 aa).

Positions 50-70 (AAREQQSFNEGRIQELEAKLS) form a coiled coil.

This sequence belongs to the GreA/GreB family.

Functionally, necessary for efficient RNA polymerase transcription elongation past template-encoded arresting sites. The arresting sites in DNA have the property of trapping a certain fraction of elongating RNA polymerases that pass through, resulting in locked ternary complexes. Cleavage of the nascent transcript by cleavage factors such as GreA or GreB allows the resumption of elongation from the new 3'terminus. GreA releases sequences of 2 to 3 nucleotides. This is Transcription elongation factor GreA from Legionella pneumophila (strain Corby).